We begin with the raw amino-acid sequence, 236 residues long: Leucyl/phenylalanyl-tRNA--protein transferase (236 aa).

It belongs to the L/F-transferase family.

It is found in the cytoplasm. It carries out the reaction N-terminal L-lysyl-[protein] + L-leucyl-tRNA(Leu) = N-terminal L-leucyl-L-lysyl-[protein] + tRNA(Leu) + H(+). The enzyme catalyses N-terminal L-arginyl-[protein] + L-leucyl-tRNA(Leu) = N-terminal L-leucyl-L-arginyl-[protein] + tRNA(Leu) + H(+). It catalyses the reaction L-phenylalanyl-tRNA(Phe) + an N-terminal L-alpha-aminoacyl-[protein] = an N-terminal L-phenylalanyl-L-alpha-aminoacyl-[protein] + tRNA(Phe). Its function is as follows. Functions in the N-end rule pathway of protein degradation where it conjugates Leu, Phe and, less efficiently, Met from aminoacyl-tRNAs to the N-termini of proteins containing an N-terminal arginine or lysine. The sequence is that of Leucyl/phenylalanyl-tRNA--protein transferase from Idiomarina loihiensis (strain ATCC BAA-735 / DSM 15497 / L2-TR).